Reading from the N-terminus, the 371-residue chain is Prephenate dehydrogenase (371 aa).

The Prephenate/arogenate dehydrogenase domain maps to 6-295; that stretch reads DTILLAGLGL…GLPLRQKGAI (290 aa). 7-37 lines the NAD(+) pocket; sequence TILLAGLGLIGGSIALAIKKNHPGKRIIGID. The ACT domain occupies 300 to 371; the sequence is DLYVDVPDHP…RAEYETFYAD (72 aa).

Belongs to the prephenate/arogenate dehydrogenase family.

It catalyses the reaction prephenate + NAD(+) = 3-(4-hydroxyphenyl)pyruvate + CO2 + NADH. It functions in the pathway amino-acid biosynthesis; L-tyrosine biosynthesis; (4-hydroxyphenyl)pyruvate from prephenate (NAD(+) route): step 1/1. This is Prephenate dehydrogenase (tyrA) from Bacillus subtilis (strain 168).